The following is a 596-amino-acid chain: NADH-quinone oxidoreductase subunit C/D (596 aa).

Residues 1–186 are NADH dehydrogenase I subunit C; sequence MVDIMCNDST…NPFILTKQKE (186 aa). Positions 210 to 596 are NADH dehydrogenase I subunit D; sequence NFMFLNLGPN…IDFVMSDVDR (387 aa).

This sequence in the N-terminal section; belongs to the complex I 30 kDa subunit family. The protein in the C-terminal section; belongs to the complex I 49 kDa subunit family. NDH-1 is composed of 13 different subunits. Subunits NuoB, CD, E, F, and G constitute the peripheral sector of the complex.

Its subcellular location is the cell inner membrane. The catalysed reaction is a quinone + NADH + 5 H(+)(in) = a quinol + NAD(+) + 4 H(+)(out). In terms of biological role, NDH-1 shuttles electrons from NADH, via FMN and iron-sulfur (Fe-S) centers, to quinones in the respiratory chain. The immediate electron acceptor for the enzyme in this species is believed to be ubiquinone. Couples the redox reaction to proton translocation (for every two electrons transferred, four hydrogen ions are translocated across the cytoplasmic membrane), and thus conserves the redox energy in a proton gradient. This is NADH-quinone oxidoreductase subunit C/D from Blochmanniella pennsylvanica (strain BPEN).